A 363-amino-acid polypeptide reads, in one-letter code: Small ribosomal subunit biogenesis GTPase RsgA (363 aa).

The 157-residue stretch at 112 to 268 (HQQVIAANID…LIDTPGMREL (157 aa)) folds into the CP-type G domain. Residues 157–160 (TKAD) and 210–218 (GSSGAGKST) contribute to the GTP site. Residues cysteine 291, cysteine 296, histidine 298, and cysteine 304 each coordinate Zn(2+). Residues 340-363 (RVAQNNRGKGSGKRPASVDRPGRH) form a disordered region.

This sequence belongs to the TRAFAC class YlqF/YawG GTPase family. RsgA subfamily. In terms of assembly, monomer. Associates with 30S ribosomal subunit, binds 16S rRNA. The cofactor is Zn(2+).

The protein localises to the cytoplasm. One of several proteins that assist in the late maturation steps of the functional core of the 30S ribosomal subunit. Helps release RbfA from mature subunits. May play a role in the assembly of ribosomal proteins into the subunit. Circularly permuted GTPase that catalyzes slow GTP hydrolysis, GTPase activity is stimulated by the 30S ribosomal subunit. The protein is Small ribosomal subunit biogenesis GTPase RsgA of Xanthomonas axonopodis pv. citri (strain 306).